A 214-amino-acid polypeptide reads, in one-letter code: Small ribosomal subunit protein uS3c (214 aa).

In terms of domain architecture, KH type-2 spans 39-111 (IRTYIHTISK…QLTINVLEVE (73 aa)).

It belongs to the universal ribosomal protein uS3 family. In terms of assembly, part of the 30S ribosomal subunit.

It is found in the plastid. It localises to the chloroplast. The chain is Small ribosomal subunit protein uS3c (rps3) from Phaeodactylum tricornutum (strain CCAP 1055/1).